A 118-amino-acid chain; its full sequence is NADH-quinone oxidoreductase subunit A (118 aa).

3 consecutive transmembrane segments (helical) span residues 6-26 (LPVL…LLMG), 64-84 (AILF…AVVF), and 87-107 (IGMT…VGFI).

It belongs to the complex I subunit 3 family. In terms of assembly, NDH-1 is composed of 14 different subunits. Subunits NuoA, H, J, K, L, M, N constitute the membrane sector of the complex.

It is found in the cell inner membrane. It catalyses the reaction a quinone + NADH + 5 H(+)(in) = a quinol + NAD(+) + 4 H(+)(out). Its function is as follows. NDH-1 shuttles electrons from NADH, via FMN and iron-sulfur (Fe-S) centers, to quinones in the respiratory chain. The immediate electron acceptor for the enzyme in this species is believed to be ubiquinone. Couples the redox reaction to proton translocation (for every two electrons transferred, four hydrogen ions are translocated across the cytoplasmic membrane), and thus conserves the redox energy in a proton gradient. The sequence is that of NADH-quinone oxidoreductase subunit A from Acidithiobacillus ferrooxidans (strain ATCC 53993 / BNL-5-31) (Leptospirillum ferrooxidans (ATCC 53993)).